Here is a 724-residue protein sequence, read N- to C-terminus: uncharacterized protein (724 aa).

This is an uncharacterized protein from Treponema pallidum (strain Nichols).